A 126-amino-acid chain; its full sequence is Protein chibby homolog 1 (126 aa).

Positions Met-1–Pro-10 are enriched in polar residues. Residues Met-1–Ser-26 are disordered. Residues Ser-9 and Ser-20 each carry the phosphoserine modification. The minimal region for the interaction with PKD2 stretch occupies residues Ile-60–Met-112. A coiled-coil region spans residues Gly-67 to Arg-125. The tract at residues Leu-77–Leu-98 is leucine-zipper; mediates homodimerization.

The protein belongs to the chibby family. Homodimer. Homodimerization is essential for nuclear localization and interaction with KPNA4 but is dispensable for interaction with CTNNB1. Interacts with polycystin-2/PKD2 and GM130. Interacts with the C-terminal region of CTNNB1. Interacts (C-terminus) with TCIM (C-terminus), TCIM competes with CTNNB1 for the interaction with CBY1. Interacts with FAM92A; this interaction facilitates targeting of FAM92A to cilium basal body. Interacts with CIBAR2. Interacts with KPNA4. Widely expressed. Expressed at higher levels in heart, skeletal muscle, kidney and placenta. Also found in brain, lung, liver and testis. Significantly down-regulated in thyroid and metastatic uterine tumors.

The protein resides in the nucleus speckle. The protein localises to the cytoplasm. It is found in the cytoskeleton. Its subcellular location is the cilium basal body. It localises to the microtubule organizing center. The protein resides in the centrosome. The protein localises to the centriole. It is found in the golgi apparatus. Its subcellular location is the trans-Golgi network. It localises to the cell projection. The protein resides in the cilium. The protein localises to the flagellum. It is found in the nucleus. Its function is as follows. Inhibits the Wnt/Wingless pathway by binding to CTNNB1/beta-catenin and inhibiting beta-catenin-mediated transcriptional activation through competition with TCF/LEF transcription factors. Has also been shown to play a role in regulating the intracellular trafficking of polycystin-2/PKD2 and possibly of other intracellular proteins. Promotes adipocyte and cardiomyocyte differentiation. This is Protein chibby homolog 1 (CBY1) from Homo sapiens (Human).